We begin with the raw amino-acid sequence, 235 residues long: Ubiquitin-like-conjugating enzyme ATG10 (235 aa).

The active-site Glycyl thioester intermediate is C196.

It belongs to the ATG10 family. As to quaternary structure, forms homooligomers. Interacts with ATG7 and ATG12.

Its subcellular location is the preautophagosomal structure membrane. In terms of biological role, E2-like enzyme required for the cytoplasm to vacuole transport (Cvt), autophagy and nucleophagy. Acts as an E2-like enzyme that catalyzes the conjugation of ATG12 to ATG5. ATG12 conjugation to ATG5 is required for proper localization of ATG8 to the preautophagosomal structure (PAS). Likely serves as an ATG5-recognition molecule. Autophagy is required for proper vegetative growth, asexual/sexual reproduction, and full virulence. Autophagy is particularly involved in the biosynthesis of deoxynivalenol (DON), an important virulence determinant. The sequence is that of Ubiquitin-like-conjugating enzyme ATG10 from Gibberella zeae (strain ATCC MYA-4620 / CBS 123657 / FGSC 9075 / NRRL 31084 / PH-1) (Wheat head blight fungus).